The following is a 353-amino-acid chain: UPF0283 membrane protein YPTS_2342 (353 aa).

3 consecutive transmembrane segments (helical) span residues 71 to 91 (MVTAGMVILGASVIAQSVQWV), 101 to 121 (IALGATTAGGLIILAGVGSVV), and 214 to 234 (ESALMIAVSPLALVDMAFIAW).

This sequence belongs to the UPF0283 family.

It localises to the cell inner membrane. This chain is UPF0283 membrane protein YPTS_2342, found in Yersinia pseudotuberculosis serotype IB (strain PB1/+).